We begin with the raw amino-acid sequence, 375 residues long: F420-dependent formate dehydrogenase 2 subunit beta (375 aa).

4Fe-4S ferredoxin-type domains are found at residues 268–291 (PEPE…DVCP) and 320–349 (IRLS…AKIY). [4Fe-4S] cluster is bound by residues Cys280, Cys283, Cys286, Cys290, Cys329, Cys332, Cys335, and Cys339.

It belongs to the FrhB family. Dimer of an alpha (FdhA2) and a beta (FdhB2) subunit. It depends on [4Fe-4S] cluster as a cofactor. Requires FAD as cofactor. Zn(2+) serves as cofactor.

It catalyses the reaction oxidized coenzyme F420-(gamma-L-Glu)(n) + formate + 2 H(+) = reduced coenzyme F420-(gamma-L-Glu)(n) + CO2. Functionally, catalyzes the oxidation of formate to carbon dioxide, with coenzyme F420 as the electron acceptor. In vitro can also use methyl viologen as electron acceptor. The chain is F420-dependent formate dehydrogenase 2 subunit beta from Methanococcus maripaludis (strain DSM 14266 / JCM 13030 / NBRC 101832 / S2 / LL).